The following is a 246-amino-acid chain: Small ribosomal subunit protein uS2 (246 aa).

A disordered region spans residues 224–246; it reads AKQGEESAETEAKEAETTETTTA. The span at 225–239 shows a compositional bias: basic and acidic residues; sequence KQGEESAETEAKEAE.

It belongs to the universal ribosomal protein uS2 family.

In Bacillus licheniformis (strain ATCC 14580 / DSM 13 / JCM 2505 / CCUG 7422 / NBRC 12200 / NCIMB 9375 / NCTC 10341 / NRRL NRS-1264 / Gibson 46), this protein is Small ribosomal subunit protein uS2.